We begin with the raw amino-acid sequence, 304 residues long: Nod factor export ATP-binding protein I (304 aa).

In terms of domain architecture, ABC transporter spans 6-236 (IDFQQVEKRY…EIGCDVIEIY (231 aa)). 38 to 45 (GPNGAGKT) contributes to the ATP binding site.

Belongs to the ABC transporter superfamily. Lipooligosaccharide exporter (TC 3.A.1.102) family. In terms of assembly, the complex is composed of two ATP-binding proteins (NodI) and two transmembrane proteins (NodJ).

Its subcellular location is the cell inner membrane. Functionally, part of the ABC transporter complex NodIJ involved in the export of the nodulation factors (Nod factors), the bacterial signal molecules that induce symbiosis and subsequent nodulation induction. Nod factors are LCO (lipo-chitin oligosaccharide), a modified beta-1,4-linked N-acetylglucosamine oligosaccharide. This subunit is responsible for energy coupling to the transport system. The sequence is that of Nod factor export ATP-binding protein I from Burkholderia pseudomallei (strain 1710b).